The sequence spans 312 residues: Zinc-finger homeodomain protein 9 (312 aa).

Residues 1 to 27 (MLEVRSMDMTPKSPEPESETPTRIQPA) form a disordered region. At serine 13 the chain carries Phosphoserine. The segment at 52-103 (YKECLKNHAAAIGGHALDGCGEFMPSPSSTPSDPTSLKCAACGCHRNFHRRE) adopts a ZF-HD dimerization-type; degenerate zinc-finger fold. Disordered stretches follow at residues 128 to 155 (QPHH…PPPI) and 253 to 312 (FSGG…SSSS). Over residues 136-155 (PPPLAPPLPRSPNSSSPPPI) the composition is skewed to pro residues. The segment at residues 192–255 (RKRFRTKFSS…NNKNSFKFSG (64 aa)) is a DNA-binding region (homeobox). Phosphoserine is present on serine 273.

As to quaternary structure, homo- and heterodimer with other ZFHD proteins. Interacts with MIF3; this interaction prevents nuclear localization and DNA-binding to inhibit transcription regulation activity. Binds to ZHD1, ZHD2 and ZHD11. In terms of tissue distribution, mostly expressed in flowers, stems and inflorescence and, to a lower extent, in leaves and stems.

It localises to the nucleus. In terms of biological role, putative transcription factor. The sequence is that of Zinc-finger homeodomain protein 9 (ZHD9) from Arabidopsis thaliana (Mouse-ear cress).